We begin with the raw amino-acid sequence, 231 residues long: Ribosomal RNA small subunit methyltransferase G (231 aa).

Residues glycine 92, leucine 97, valine 143 to glutamate 144, and arginine 162 each bind S-adenosyl-L-methionine.

Belongs to the methyltransferase superfamily. RNA methyltransferase RsmG family.

The protein localises to the cytoplasm. It carries out the reaction guanosine(527) in 16S rRNA + S-adenosyl-L-methionine = N(7)-methylguanosine(527) in 16S rRNA + S-adenosyl-L-homocysteine. Functionally, specifically methylates the N7 position of guanine in position 527 of 16S rRNA. In Burkholderia thailandensis (strain ATCC 700388 / DSM 13276 / CCUG 48851 / CIP 106301 / E264), this protein is Ribosomal RNA small subunit methyltransferase G.